The primary structure comprises 932 residues: Probable UDP-N-acetylglucosamine--peptide N-acetylglucosaminyltransferase SPINDLY (932 aa).

The span at 1 to 15 (MAWTEKDVENGKESD) shows a compositional bias: basic and acidic residues. Residues 1 to 39 (MAWTEKDVENGKESDSLGNNGFLKGVQSSSDSKGSPVRI) form a disordered region. TPR repeat units follow at residues 48–81 (GKDA…DSGS), 82–115 (IESL…DPQN), 116–149 (ACAL…DPSY), 157–190 (AIVL…DSHY), 191–224 (APAY…RPMY), 225–258 (AEAY…SPNF), 266–299 (AIAL…NWHY), 300–333 (ADAM…NPHC), 334–367 (AEAC…KPNF), 369–401 (QSLN…NPTY), and 402–435 (AEAY…DPDS). Residues 436-932 (RNAGQNRLLA…NQAGNPGKQS (497 aa)) form a catalytic region region. Residues 881–902 (VSPIEKTRISASKDGPIKENGF) form a disordered region.

This sequence belongs to the glycosyltransferase 41 family. O-GlcNAc transferase subfamily. In terms of tissue distribution, expressed in stems, leaves and flowers. Expressed during all stages of corolla maturation.

It localises to the nucleus. The catalysed reaction is L-seryl-[protein] + UDP-N-acetyl-alpha-D-glucosamine = 3-O-(N-acetyl-beta-D-glucosaminyl)-L-seryl-[protein] + UDP + H(+). It catalyses the reaction L-threonyl-[protein] + UDP-N-acetyl-alpha-D-glucosamine = 3-O-(N-acetyl-beta-D-glucosaminyl)-L-threonyl-[protein] + UDP + H(+). Its pathway is protein modification; protein glycosylation. Probable O-linked N-acetylglucosamine transferase (OGT) involved in various processes such as gibberellin (GA) signaling pathway. OGTs catalyze the addition of nucleotide-activated sugars directly onto the polypeptide through O-glycosidic linkage with the hydroxyl of serine or threonine. Probably acts by adding O-linked sugars to yet unknown proteins. The protein is Probable UDP-N-acetylglucosamine--peptide N-acetylglucosaminyltransferase SPINDLY (SPY) of Petunia hybrida (Petunia).